Consider the following 352-residue polypeptide: Photosystem II D2 protein (352 aa).

The chain crosses the membrane as a helical span at residues Thr-40 to Thr-60. His-117 lines the chlorophyll a pocket. The helical transmembrane segment at Gly-124–Pro-140 threads the bilayer. Pheophytin a-binding residues include Gln-129 and Asn-142. Residues Val-152–Ser-165 traverse the membrane as a helical segment. His-197 is a binding site for chlorophyll a. The chain crosses the membrane as a helical span at residues Gly-207–Glu-227. Residues His-214 and Phe-261 each coordinate a plastoquinone. Fe cation is bound at residue His-214. His-268 contacts Fe cation. A helical transmembrane segment spans residues Gly-278–Arg-294.

It belongs to the reaction center PufL/M/PsbA/D family. PSII is composed of 1 copy each of membrane proteins PsbA, PsbB, PsbC, PsbD, PsbE, PsbF, PsbH, PsbI, PsbJ, PsbK, PsbL, PsbM, PsbT, PsbX, PsbY, PsbZ, Psb30/Ycf12, at least 3 peripheral proteins of the oxygen-evolving complex and a large number of cofactors. It forms dimeric complexes. The cofactor is The D1/D2 heterodimer binds P680, chlorophylls that are the primary electron donor of PSII, and subsequent electron acceptors. It shares a non-heme iron and each subunit binds pheophytin, quinone, additional chlorophylls, carotenoids and lipids. There is also a Cl(-1) ion associated with D1 and D2, which is required for oxygen evolution. The PSII complex binds additional chlorophylls, carotenoids and specific lipids..

It is found in the plastid. Its subcellular location is the organellar chromatophore thylakoid membrane. It catalyses the reaction 2 a plastoquinone + 4 hnu + 2 H2O = 2 a plastoquinol + O2. Photosystem II (PSII) is a light-driven water:plastoquinone oxidoreductase that uses light energy to abstract electrons from H(2)O, generating O(2) and a proton gradient subsequently used for ATP formation. It consists of a core antenna complex that captures photons, and an electron transfer chain that converts photonic excitation into a charge separation. The D1/D2 (PsbA/PsbD) reaction center heterodimer binds P680, the primary electron donor of PSII as well as several subsequent electron acceptors. D2 is needed for assembly of a stable PSII complex. The sequence is that of Photosystem II D2 protein from Paulinella chromatophora.